The following is a 390-amino-acid chain: Exodeoxyribonuclease 7 large subunit (390 aa).

This sequence belongs to the XseA family. In terms of assembly, heterooligomer composed of large and small subunits.

It is found in the cytoplasm. The catalysed reaction is Exonucleolytic cleavage in either 5'- to 3'- or 3'- to 5'-direction to yield nucleoside 5'-phosphates.. In terms of biological role, bidirectionally degrades single-stranded DNA into large acid-insoluble oligonucleotides, which are then degraded further into small acid-soluble oligonucleotides. The polypeptide is Exodeoxyribonuclease 7 large subunit (Synechococcus sp. (strain CC9311)).